Reading from the N-terminus, the 362-residue chain is G-prodeshotein coupled receptor 4 (362 aa).

Residues 1 to 8 are Extracellular-facing; the sequence is MGNHTWEG. Asn-3 carries N-linked (GlcNAc...) asparagine glycosylation. The chain crosses the membrane as a helical span at residues 9 to 45; the sequence is CHVDSRVDHLFPPSLYIFVIGVGLPTNCLALWAAYRQ. Disulfide bonds link Cys-9-Cys-258 and Cys-90-Cys-168. Topologically, residues 46–49 are cytoplasmic; that stretch reads VQQR. A helical membrane pass occupies residues 50–80; that stretch reads NELGVYLMNLSIADLLYICTLPLWVDYFLHH. At 81–85 the chain is on the extracellular side; sequence DNWIH. A helical membrane pass occupies residues 86-121; it reads GPGSCKLFGFIFYTNIYISIAFLCCISVDRYLAVAH. At 122–129 the chain is on the cytoplasmic side; the sequence is PLRFARLR. A helical membrane pass occupies residues 130-156; it reads RVKTAVAVSSVVWATELGANSAPLFHD. The Extracellular portion of the chain corresponds to 157–172; sequence ELFRDRYNHTFCFEKF. Residues 157–172 are extracellular loop 2 (ECL2); it reads ELFRDRYNHTFCFEKF. Asn-164 is a glycosylation site (N-linked (GlcNAc...) asparagine). Residues 173–210 form a helical membrane-spanning segment; the sequence is PMEGWVAWMNLYRVFVGFLFPWALMLLSYRGILRAVRG. Residues 211-214 lie on the Cytoplasmic side of the membrane; the sequence is SVST. Residues 215 to 250 traverse the membrane as a helical segment; the sequence is ERQEKAKIKRLALSLIAIVLVCFAPYHVLLLSRSAI. Residues 251–260 are Extracellular-facing; the sequence is YLGRPWDCGF. The chain crosses the membrane as a helical span at residues 261–289; sequence EERVFSAYHSSLAFTSLNCVADPILYCLV. The Cytoplasmic segment spans residues 290-362; the sequence is NEGARSDVAK…VQLKMLPPAQ (73 aa). Positions 335 to 362 are disordered; sequence AKAMTGSWAATPPSQGDQVQLKMLPPAQ.

Belongs to the G-protein coupled receptor 1 family.

It localises to the cell membrane. With respect to regulation, activated by a network of residues that connects an extracellular-facing cavity to Glu-145, a conserved charged residue buried in the transmembrane core of the receptor. Protonation likely drives conformational changes in extracellular loop 2 (ECL2), which stabilizes movement of transmembrane 3 (TM3) and a series of rearrangements that connect the extracellular-facing cavity to Glu-145, a residue only conserved in proton-sensing G-protein coupled receptors. Proton-sensing G-protein coupled receptor activated by extracellular pH, which is required to monitor pH changes and generate adaptive reactions. Activated by an optimal pH of 6.8-7.2. Ligand binding causes a conformation change that triggers signaling via guanine nucleotide-binding proteins (G proteins) and modulates the activity of downstream effectors, such as adenylate cyclase. GPR4 is mainly coupled to G(s) G proteins and mediates activation of adenylate cyclase activity. May also couple with G(q) and G(12)/G(13) G proteins. Acts as a key regulator of respiratory sensitivity to CO2/H(+) in brain retrotrapezoid nucleus neurons: acts by mediating detection of protons generated by the formation of carbonic acid in the blood, an important mechanism to impulse to breathe. Also acts as a regulator of acid secretion in the kidney collecting duct by maintaining acid-base homeostasis in the kidney. Acidosis-induced GPR4 activation increases paracellular gap formation and permeability of vascular endothelial cells, possibly through the G(12)/G(13)/Rho GTPase signaling pathway. The sequence is that of G-prodeshotein coupled receptor 4 from Homo sapiens (Human).